The following is a 457-amino-acid chain: MVRLYNTLTKKKELFIPIDKDHVKMYVCGPTVYDTAHIGNARSVVVYDVLFQLLKFCYGKVTYVRNITDIDDKIINAASEKNSNIESITTYYIKAFHDDMESINCKKPTYEPKATENVDYIIKLIEHLLQSGHAYESDKHVYFNIESYHEYGALSGKKTDELVPGSRVEVNENKKHPGDFVLWKPANDIDYKLSSYWNSPWGEGRPGWHIECSAMSYAYLGKDFDIHGGGIDLQFPHHENEIAQSKSAFAGSMFAKYWMHNGFLTVNEEKMSKSLFNIVKVRDLLDSGIKGEVIRYALLKTHYRKPLDWTENVISDAQETLNKFYRLSRGLDTINIDESNAEISKDFIDALKNDLNIPEALAILHEMAAKINKMSNESEKLKLTESFVKSARFIGLLESSYQEWFTAGVSHQEIERLIDLRRAAKQNKDYNTADKIRDQLKQIGVTISDNEDGTTTW.

Position 28 (C28) interacts with Zn(2+). The short motif at 30–40 (PTVYDTAHIGN) is the 'HIGH' region element. C212, H237, and E241 together coordinate Zn(2+). Residues 270 to 274 (KMSKS) carry the 'KMSKS' region motif. K273 contacts ATP.

It belongs to the class-I aminoacyl-tRNA synthetase family. In terms of assembly, monomer. The cofactor is Zn(2+).

It localises to the cytoplasm. The enzyme catalyses tRNA(Cys) + L-cysteine + ATP = L-cysteinyl-tRNA(Cys) + AMP + diphosphate. This Wolbachia sp. subsp. Drosophila simulans (strain wRi) protein is Cysteine--tRNA ligase.